We begin with the raw amino-acid sequence, 164 residues long: HTH-type transcriptional regulator PapX (164 aa).

The HTH marR-type domain occupies 25–159 (EHLLMQLCIR…FEVISKKLLA (135 aa)).

Its subcellular location is the cytoplasm. In Escherichia coli, this protein is HTH-type transcriptional regulator PapX (papX).